Here is a 60-residue protein sequence, read N- to C-terminus: Large ribosomal subunit protein bL32 (60 aa).

A disordered region spans residues 1–60 (MAVQQNKKSPSKRGMHRSHNALTVPGIAVESTTGETHLRHHISPTGFYRGRKVLKTKSEA). Basic residues-rich tracts occupy residues 9 to 19 (SPSKRGMHRSH) and 49 to 60 (RGRKVLKTKSEA).

This sequence belongs to the bacterial ribosomal protein bL32 family.

This is Large ribosomal subunit protein bL32 from Polaromonas sp. (strain JS666 / ATCC BAA-500).